The sequence spans 247 residues: uncharacterized protein (247 aa).

Belongs to the AIM2 family.

The protein resides in the cytoplasm. The protein localises to the nucleus. This is an uncharacterized protein from Schizosaccharomyces pombe (strain 972 / ATCC 24843) (Fission yeast).